The primary structure comprises 120 residues: Large ribosomal subunit protein bL20 (120 aa).

It belongs to the bacterial ribosomal protein bL20 family.

Binds directly to 23S ribosomal RNA and is necessary for the in vitro assembly process of the 50S ribosomal subunit. It is not involved in the protein synthesizing functions of that subunit. The protein is Large ribosomal subunit protein bL20 of Ureaplasma urealyticum serovar 10 (strain ATCC 33699 / Western).